The sequence spans 435 residues: Envelope glycoprotein M (435 aa).

Residues 1–36 (MGTQKKGPRSEKVSPYDTTTPEVEALDHQMDTLNWR) lie on the Intravirion side of the membrane. A helical membrane pass occupies residues 37 to 57 (IWIIQVMMFTLGAVMLLATLI). Over 58–111 (AASSEYTGIPCFYAAVVDYELFNATLDGGVWSGNRGGYSAPVLFLEPHSVVAFT) the chain is Virion surface. The chain crosses the membrane as a helical span at residues 112–132 (YYTALTAMAMAVYTLITAAII). The Intravirion portion of the chain corresponds to 133–155 (HRETKNQRVRQSSGVAWLVVDPT). The helical transmembrane segment at 156–176 (TLFWGLLSLWLLNAVVLLLAY) threads the bilayer. Residues 177-178 (KQ) are Virion surface-facing. A helical transmembrane segment spans residues 179–199 (IGVAATLYLGHFATSVIFTTY). Topologically, residues 200–233 (FCGRGKLDETNIKAVANLRQQSVFLYRLAGPTRA) are intravirion. Residues 234-254 (VFVNLMAALMAICILFVSLML) form a helical membrane-spanning segment. Residues 255–265 (ELVVANHLHTG) lie on the Virion surface side of the membrane. A helical transmembrane segment spans residues 266-288 (LWSSVSVAMSTFSTLSVVYLIVS). Over 289–294 (ELILAH) the chain is Intravirion. A helical membrane pass occupies residues 295–317 (YIHVLIGPSLGTLVACATLGTAA). Topologically, residues 318–334 (HSYMDRLYDPISVQSPR) are virion surface. A helical transmembrane segment spans residues 335–355 (LIPTTRGTLACLAVFSVVMLL). Over 356 to 435 (LRLMRAYVYH…LYERSNSGWE (80 aa)) the chain is Intravirion.

The protein belongs to the herpesviridae glycoprotein M family. In terms of assembly, interacts (via N-terminus) with gN (via N-terminus). The gM-gN heterodimer forms the gCII complex.

The protein localises to the virion membrane. Its subcellular location is the host Golgi apparatus. It localises to the host trans-Golgi network. It is found in the host endosome membrane. The protein resides in the host nucleus inner membrane. Its function is as follows. Envelope glycoprotein important for virion assembly and egress. Plays a role in the correct incorporation of gH-gL into virion membrane. Directs the glycoprotein N (gN) to the host trans-Golgi network. The polypeptide is Envelope glycoprotein M (Homo sapiens (Human)).